The sequence spans 482 residues: Dihydrolipoyllysine-residue acetyltransferase component of pyruvate dehydrogenase complex, mitochondrial (482 aa).

A mitochondrion-targeting transit peptide spans 1–28; the sequence is MSAFVRVVPRISRSSVLTRSLRLQLRCY. The 77-residue stretch at 34-110 folds into the Lipoyl-binding domain; it reads HTIIGMPALS…PVNKPIAVYV (77 aa). K75 carries the post-translational modification N6-lipoyllysine. The disordered stretch occupies residues 122–170; sequence FKLEDSGSDSKTSTKAQPAEPQAEKKQEAPAEETKTSAPEAKKSDVAAP. Over residues 143–166 the composition is skewed to basic and acidic residues; that stretch reads QAEKKQEAPAEETKTSAPEAKKSD. One can recognise a Peripheral subunit-binding (PSBD) domain in the interval 175–212; the sequence is FASPLAKTIALEKGISLKDVHGTGPRGRITKADIESYL. A disordered region spans residues 214–251; sequence KSSKQSSQTSGAAAATPAAATSSTTAGSAPSPSSTASY. Residues 217-250 show a composition bias toward low complexity; sequence KQSSQTSGAAAATPAAATSSTTAGSAPSPSSTAS. Residues H455 and D459 contribute to the active site.

The protein belongs to the 2-oxoacid dehydrogenase family. In terms of assembly, eukaryotic pyruvate dehydrogenase (PDH) complexes are organized as a core consisting of the oligomeric dihydrolipoamide acetyl-transferase (E2), around which are arranged multiple copies of pyruvate dehydrogenase (E1), dihydrolipoamide dehydrogenase (E3) and protein X (E3BP) bound by non-covalent bonds. The cofactor is (R)-lipoate.

It is found in the mitochondrion matrix. It catalyses the reaction N(6)-[(R)-dihydrolipoyl]-L-lysyl-[protein] + acetyl-CoA = N(6)-[(R)-S(8)-acetyldihydrolipoyl]-L-lysyl-[protein] + CoA. Its function is as follows. The pyruvate dehydrogenase complex catalyzes the overall conversion of pyruvate to acetyl-CoA and CO(2). In Saccharomyces cerevisiae (strain ATCC 204508 / S288c) (Baker's yeast), this protein is Dihydrolipoyllysine-residue acetyltransferase component of pyruvate dehydrogenase complex, mitochondrial (LAT1).